The chain runs to 197 residues: dTTP/UTP pyrophosphatase (197 aa).

Catalysis depends on D70, which acts as the Proton acceptor.

It belongs to the Maf family. YhdE subfamily. A divalent metal cation serves as cofactor.

It is found in the cytoplasm. The catalysed reaction is dTTP + H2O = dTMP + diphosphate + H(+). It carries out the reaction UTP + H2O = UMP + diphosphate + H(+). Nucleoside triphosphate pyrophosphatase that hydrolyzes dTTP and UTP. May have a dual role in cell division arrest and in preventing the incorporation of modified nucleotides into cellular nucleic acids. The polypeptide is dTTP/UTP pyrophosphatase (Methanosarcina barkeri (strain Fusaro / DSM 804)).